A 269-amino-acid chain; its full sequence is Phosphatidylglycerol--prolipoprotein diacylglyceryl transferase (269 aa).

A run of 7 helical transmembrane segments spans residues isoleucine 17–tryptophan 37, phenylalanine 59–tyrosine 79, tryptophan 95–phenylalanine 115, leucine 123–isoleucine 143, alanine 181–isoleucine 201, glycine 206–phenylalanine 226, and methionine 242–leucine 262. An a 1,2-diacyl-sn-glycero-3-phospho-(1'-sn-glycerol)-binding site is contributed by arginine 142.

Belongs to the Lgt family.

It is found in the cell inner membrane. The catalysed reaction is L-cysteinyl-[prolipoprotein] + a 1,2-diacyl-sn-glycero-3-phospho-(1'-sn-glycerol) = an S-1,2-diacyl-sn-glyceryl-L-cysteinyl-[prolipoprotein] + sn-glycerol 1-phosphate + H(+). Its pathway is protein modification; lipoprotein biosynthesis (diacylglyceryl transfer). Catalyzes the transfer of the diacylglyceryl group from phosphatidylglycerol to the sulfhydryl group of the N-terminal cysteine of a prolipoprotein, the first step in the formation of mature lipoproteins. The chain is Phosphatidylglycerol--prolipoprotein diacylglyceryl transferase from Paramagnetospirillum magneticum (strain ATCC 700264 / AMB-1) (Magnetospirillum magneticum).